The following is a 208-amino-acid chain: GATA transcription factor 29 (208 aa).

Residues 155 to 208 (GMKKCTNMNCNALNTPMWRRGPLGPKSLCNACGIKFRKEEERKAKRNVVIVLDD) form a GATA-type; atypical zinc finger.

Belongs to the type IV zinc-finger family. Class B subfamily.

The protein localises to the nucleus. Transcriptional regulator that specifically binds 5'-GATA-3' or 5'-GAT-3' motifs within gene promoters. This is GATA transcription factor 29 (GATA29) from Arabidopsis thaliana (Mouse-ear cress).